Reading from the N-terminus, the 322-residue chain is Thioredoxin reductase (322 aa).

FAD-binding positions include 12–15 (SGPA), 34–42 (EGAVTAGGA), Asn51, and Val84. Cysteines 136 and 139 form a disulfide. Residues His176, Arg182, Ile239, and Tyr259 each coordinate NADP(+). FAD is bound by residues Asp279 and 286 to 289 (RQAI). Arg286 lines the NADP(+) pocket.

It belongs to the class-II pyridine nucleotide-disulfide oxidoreductase family. As to quaternary structure, homodimer. The cofactor is FAD.

It localises to the cytoplasm. The enzyme catalyses [thioredoxin]-dithiol + NADP(+) = [thioredoxin]-disulfide + NADPH + H(+). This is Thioredoxin reductase from Streptomyces coelicolor (strain ATCC BAA-471 / A3(2) / M145).